The following is a 485-amino-acid chain: Probable WRKY transcription factor 10 (485 aa).

2 disordered regions span residues Ile-43–Gly-62 and Ile-215–Gln-293. The span at Ser-216–Ala-264 shows a compositional bias: acidic residues. A DNA-binding region (WRKY) is located at residues Ser-301–Pro-366. Positions 332, 337, 361, and 363 each coordinate Zn(2+). The disordered stretch occupies residues Asp-358 to Met-417. Residues Ala-368 to Ala-380 are compositionally biased toward low complexity. Over residues Pro-399 to Ser-411 the composition is skewed to pro residues.

Belongs to the WRKY group I family. In terms of assembly, interacts with IKU1. In terms of tissue distribution, expressed in male gametophytes (pollen) and in the endosperm of fertilized ovules.

Its subcellular location is the nucleus. Its function is as follows. Transcription factor. Interacts specifically with the W box (5'-(T)TGAC[CT]-3'), a frequently occurring elicitor-responsive cis-acting element. Modulates seed size by negatively regulating the cellularization of syncytial endosperm. In Arabidopsis thaliana (Mouse-ear cress), this protein is Probable WRKY transcription factor 10 (WRKY10).